The following is a 466-amino-acid chain: Asparagine--tRNA ligase (466 aa).

It belongs to the class-II aminoacyl-tRNA synthetase family. In terms of assembly, homodimer.

The protein resides in the cytoplasm. It carries out the reaction tRNA(Asn) + L-asparagine + ATP = L-asparaginyl-tRNA(Asn) + AMP + diphosphate + H(+). This Salmonella typhimurium (strain LT2 / SGSC1412 / ATCC 700720) protein is Asparagine--tRNA ligase.